Consider the following 231-residue polypeptide: UPF0758 protein pc1765 (231 aa).

The MPN domain occupies 107 to 229 (LIEHSSHAYQ…YVSFKDQNLL (123 aa)). Zn(2+) is bound by residues His178, His180, and Asp191. The JAMM motif signature appears at 178–191 (HNHPSGDPMPSNQD).

This sequence belongs to the UPF0758 family.

The polypeptide is UPF0758 protein pc1765 (Protochlamydia amoebophila (strain UWE25)).